The sequence spans 599 residues: Adenine deaminase (599 aa).

This sequence belongs to the metallo-dependent hydrolases superfamily. Adenine deaminase family. The cofactor is Mn(2+).

The catalysed reaction is adenine + H2O + H(+) = hypoxanthine + NH4(+). The polypeptide is Adenine deaminase (Clostridium botulinum (strain Loch Maree / Type A3)).